We begin with the raw amino-acid sequence, 340 residues long: Ribonucleoside-diphosphate reductase small subunit (340 aa).

Fe cation-binding residues include D94, E124, and H127. The active site involves Y131. The chain crosses the membrane as a helical span at residues F180 to Y200. Fe cation contacts are provided by E187, E221, and H224.

Belongs to the ribonucleoside diphosphate reductase small chain family. As to quaternary structure, heterotetramer composed of a homodimer of the large subunit (R1) and a homodimer of the small subunit (R2). Larger multisubunit protein complex are also active, composed of (R1)n(R2)n. Requires Fe cation as cofactor.

It localises to the host membrane. It catalyses the reaction a 2'-deoxyribonucleoside 5'-diphosphate + [thioredoxin]-disulfide + H2O = a ribonucleoside 5'-diphosphate + [thioredoxin]-dithiol. Its function is as follows. Ribonucleoside-diphosphate reductase holoenzyme provides the precursors necessary for viral DNA synthesis. Allows virus growth in non-dividing cells, as well as reactivation from latency in infected hosts. Catalyzes the biosynthesis of deoxyribonucleotides from the corresponding ribonucleotides. This Human herpesvirus 1 (strain KOS) (HHV-1) protein is Ribonucleoside-diphosphate reductase small subunit.